The chain runs to 715 residues: Fatty acid oxidation complex subunit alpha (715 aa).

An enoyl-CoA hydratase region spans residues methionine 1–proline 190. The 3-hydroxyacyl-CoA dehydrogenase stretch occupies residues glycine 306–asparagine 715.

The protein in the N-terminal section; belongs to the enoyl-CoA hydratase/isomerase family. In the central section; belongs to the 3-hydroxyacyl-CoA dehydrogenase family. In terms of assembly, heterotetramer of two alpha chains (FadJ) and two beta chains (FadI).

The protein localises to the cytoplasm. It carries out the reaction a (3S)-3-hydroxyacyl-CoA = a (2E)-enoyl-CoA + H2O. It catalyses the reaction a 4-saturated-(3S)-3-hydroxyacyl-CoA = a (3E)-enoyl-CoA + H2O. The enzyme catalyses a (3S)-3-hydroxyacyl-CoA + NAD(+) = a 3-oxoacyl-CoA + NADH + H(+). The catalysed reaction is (3S)-3-hydroxybutanoyl-CoA = (3R)-3-hydroxybutanoyl-CoA. It functions in the pathway lipid metabolism; fatty acid beta-oxidation. Functionally, catalyzes the formation of a hydroxyacyl-CoA by addition of water on enoyl-CoA. Also exhibits 3-hydroxyacyl-CoA epimerase and 3-hydroxyacyl-CoA dehydrogenase activities. This chain is Fatty acid oxidation complex subunit alpha, found in Salmonella enteritidis PT4 (strain P125109).